Reading from the N-terminus, the 175-residue chain is Thioredoxin-like protein CITRX, chloroplastic (175 aa).

The transit peptide at 1 to 73 (MQAASLAFHP…REDYLVKKLS (73 aa)) directs the protein to the chloroplast. The Thioredoxin domain maps to 74–175 (AKEIQELIKG…MMRDIINNDL (102 aa)). Residues C98 and C101 each act as nucleophile in the active site. C98 and C101 are oxidised to a cystine.

The protein belongs to the thioredoxin family. Plant CITRX-type subfamily.

It localises to the plastid. Its subcellular location is the chloroplast. Its function is as follows. Probable thiol-disulfide oxidoreductase that may play a role in proper chloroplast development. The sequence is that of Thioredoxin-like protein CITRX, chloroplastic from Solanum tuberosum (Potato).